The following is a 139-amino-acid chain: Flagellar basal body rod protein FlgB (139 aa).

Belongs to the flagella basal body rod proteins family. As to quaternary structure, the basal body constitutes a major portion of the flagellar organelle and consists of a number of rings mounted on a central rod. In Gram-negative bacteria, at least four rings, L, P, S and M are present, whereas Gram-positive bacteria lack the L and P rings. The rod consists of about 26 subunits of FlgG in the distal portion, and FlgB, FlgC and FlgF build up the proximal portion of the rod with about 6 subunits each. Rod assembly occurs by export via the flagellum-specific pathway of its constituent proteins and by their incorporation into the rod structure in the probable order of FlgB, FlgC, FlgF and FlgG. Another protein, FliE, also assembles onto the stable rod structure.

Its subcellular location is the bacterial flagellum basal body. Functionally, structural component of flagellum, the bacterial motility apparatus. Part of the rod structure of flagellar basal body. The protein is Flagellar basal body rod protein FlgB of Proteus mirabilis.